We begin with the raw amino-acid sequence, 588 residues long: Aspartate--tRNA ligase (588 aa).

Glutamate 172 provides a ligand contact to L-aspartate. The aspartate stretch occupies residues 196-199 (QLFK). Arginine 218 lines the L-aspartate pocket. ATP-binding positions include 218 to 220 (RDE) and glutamine 227. Histidine 449 provides a ligand contact to L-aspartate. ATP is bound at residue glutamate 483. Arginine 490 is a binding site for L-aspartate. 535–538 (GLDR) provides a ligand contact to ATP.

This sequence belongs to the class-II aminoacyl-tRNA synthetase family. Type 1 subfamily. As to quaternary structure, homodimer.

The protein resides in the cytoplasm. It catalyses the reaction tRNA(Asp) + L-aspartate + ATP = L-aspartyl-tRNA(Asp) + AMP + diphosphate. Functionally, catalyzes the attachment of L-aspartate to tRNA(Asp) in a two-step reaction: L-aspartate is first activated by ATP to form Asp-AMP and then transferred to the acceptor end of tRNA(Asp). The polypeptide is Aspartate--tRNA ligase (Haemophilus influenzae (strain PittGG)).